Reading from the N-terminus, the 289-residue chain is Aquaporin PIP1-1 (289 aa).

The tract at residues 1-36 (MEGKEEDVRLGANRYSERQPIGTAAQGAGDDKDYKE) is disordered. 2 consecutive transmembrane segments (helical) span residues 58 to 78 (IAEF…VMGV) and 93 to 115 (IAWS…SGGH). The NPA 1 motif lies at 117–119 (NPA). 3 consecutive transmembrane segments (helical) span residues 136 to 156 (IFYI…VKGF), 178 to 198 (GDGL…VFSA), and 212 to 232 (ILAP…TIPI). An NPA 2 motif is present at residues 238–240 (NPA). The chain crosses the membrane as a helical span at residues 260-280 (IFWVGPFVGAALAAIYHQVII).

This sequence belongs to the MIP/aquaporin (TC 1.A.8) family. PIP (TC 1.A.8.11) subfamily. As to expression, expressed in roots, leaves and anthers.

The protein localises to the cell membrane. Its function is as follows. May function as water channel to facilitate the transport of water across cell membrane. The polypeptide is Aquaporin PIP1-1 (PIP1-1) (Oryza sativa subsp. japonica (Rice)).